Consider the following 182-residue polypeptide: UPF0301 protein NMCC_1249 (182 aa).

Belongs to the UPF0301 (AlgH) family.

This chain is UPF0301 protein NMCC_1249, found in Neisseria meningitidis serogroup C (strain 053442).